A 152-amino-acid polypeptide reads, in one-letter code: 3-dehydroquinate dehydratase (152 aa).

Residue Tyr-23 is the Proton acceptor of the active site. Positions 74, 80, and 87 each coordinate substrate. His-100 functions as the Proton donor in the catalytic mechanism. Substrate is bound by residues 101 to 102 (LS) and Arg-111.

It belongs to the type-II 3-dehydroquinase family. As to quaternary structure, homododecamer.

The enzyme catalyses 3-dehydroquinate = 3-dehydroshikimate + H2O. It functions in the pathway metabolic intermediate biosynthesis; chorismate biosynthesis; chorismate from D-erythrose 4-phosphate and phosphoenolpyruvate: step 3/7. Catalyzes a trans-dehydration via an enolate intermediate. The chain is 3-dehydroquinate dehydratase from Clostridium botulinum (strain Langeland / NCTC 10281 / Type F).